The primary structure comprises 123 residues: UPF0102 protein Pcar_2217 (123 aa).

This sequence belongs to the UPF0102 family.

The sequence is that of UPF0102 protein Pcar_2217 from Syntrophotalea carbinolica (strain DSM 2380 / NBRC 103641 / GraBd1) (Pelobacter carbinolicus).